A 262-amino-acid chain; its full sequence is tRNA pseudouridine synthase A 2 (262 aa).

The active-site Nucleophile is Asp-66. Tyr-125 contributes to the substrate binding site.

It belongs to the tRNA pseudouridine synthase TruA family. Homodimer.

The catalysed reaction is uridine(38/39/40) in tRNA = pseudouridine(38/39/40) in tRNA. In terms of biological role, formation of pseudouridine at positions 38, 39 and 40 in the anticodon stem and loop of transfer RNAs. This is tRNA pseudouridine synthase A 2 from Protochlamydia amoebophila (strain UWE25).